A 166-amino-acid polypeptide reads, in one-letter code: NAD(P)H-quinone oxidoreductase subunit I, chloroplastic (166 aa).

4Fe-4S ferredoxin-type domains lie at 55-84 and 95-124; these read GRIHFEFDKCIACEVCVRVCPIDLPVVDWK and LNYSIDFGICIFCGNCVEYCPTNCLSMTEE. Residues Cys-64, Cys-67, Cys-70, Cys-74, Cys-104, Cys-107, Cys-110, and Cys-114 each coordinate [4Fe-4S] cluster.

It belongs to the complex I 23 kDa subunit family. In terms of assembly, NDH is composed of at least 16 different subunits, 5 of which are encoded in the nucleus. [4Fe-4S] cluster serves as cofactor.

It localises to the plastid. The protein resides in the chloroplast thylakoid membrane. It carries out the reaction a plastoquinone + NADH + (n+1) H(+)(in) = a plastoquinol + NAD(+) + n H(+)(out). The catalysed reaction is a plastoquinone + NADPH + (n+1) H(+)(in) = a plastoquinol + NADP(+) + n H(+)(out). Its function is as follows. NDH shuttles electrons from NAD(P)H:plastoquinone, via FMN and iron-sulfur (Fe-S) centers, to quinones in the photosynthetic chain and possibly in a chloroplast respiratory chain. The immediate electron acceptor for the enzyme in this species is believed to be plastoquinone. Couples the redox reaction to proton translocation, and thus conserves the redox energy in a proton gradient. This chain is NAD(P)H-quinone oxidoreductase subunit I, chloroplastic, found in Oxypappus scaber.